The primary structure comprises 248 residues: Large ribosomal subunit protein uL4 (248 aa).

Disordered regions lie at residues 48–96 (GTHK…PVPR) and 210–248 (AFSE…RTGA). Residues 233 to 248 (DATKARSSRHDDRTGA) show a composition bias toward basic and acidic residues.

It belongs to the universal ribosomal protein uL4 family. In terms of assembly, part of the 50S ribosomal subunit.

One of the primary rRNA binding proteins, this protein initially binds near the 5'-end of the 23S rRNA. It is important during the early stages of 50S assembly. It makes multiple contacts with different domains of the 23S rRNA in the assembled 50S subunit and ribosome. Functionally, forms part of the polypeptide exit tunnel. This is Large ribosomal subunit protein uL4 from Tropheryma whipplei (strain Twist) (Whipple's bacillus).